The sequence spans 282 residues: Elongation factor Ts (282 aa).

Residues 80–83 (TDFV) are involved in Mg(2+) ion dislocation from EF-Tu.

This sequence belongs to the EF-Ts family.

It is found in the cytoplasm. In terms of biological role, associates with the EF-Tu.GDP complex and induces the exchange of GDP to GTP. It remains bound to the aminoacyl-tRNA.EF-Tu.GTP complex up to the GTP hydrolysis stage on the ribosome. The sequence is that of Elongation factor Ts (tsf) from Chlamydia muridarum (strain MoPn / Nigg).